The following is a 621-amino-acid chain: ATP-dependent lipid A-core flippase (621 aa).

Transmembrane regions (helical) follow at residues isoleucine 32–phenylalanine 52, valine 91–isoleucine 111, isoleucine 192–leucine 212, serine 286–tryptophan 306, and tyrosine 312–isoleucine 332. Residues valine 33–threonine 344 enclose the ABC transmembrane type-1 domain. The ABC transporter domain maps to phenylalanine 378–isoleucine 611. Glycine 410–serine 417 is an ATP binding site.

The protein belongs to the ABC transporter superfamily. Lipid exporter (TC 3.A.1.106) family. In terms of assembly, homodimer.

It is found in the cell inner membrane. It carries out the reaction ATP + H2O + lipid A-core oligosaccharideSide 1 = ADP + phosphate + lipid A-core oligosaccharideSide 2.. Its function is as follows. Involved in lipopolysaccharide (LPS) biosynthesis. Translocates lipid A-core from the inner to the outer leaflet of the inner membrane. Transmembrane domains (TMD) form a pore in the inner membrane and the ATP-binding domain (NBD) is responsible for energy generation. In Neisseria meningitidis serogroup A / serotype 4A (strain DSM 15465 / Z2491), this protein is ATP-dependent lipid A-core flippase.